A 130-amino-acid polypeptide reads, in one-letter code: Large ribosomal subunit protein bL19 (130 aa).

It belongs to the bacterial ribosomal protein bL19 family.

Its function is as follows. This protein is located at the 30S-50S ribosomal subunit interface and may play a role in the structure and function of the aminoacyl-tRNA binding site. The chain is Large ribosomal subunit protein bL19 from Burkholderia lata (strain ATCC 17760 / DSM 23089 / LMG 22485 / NCIMB 9086 / R18194 / 383).